The sequence spans 567 residues: DNA ligase B (567 aa).

Catalysis depends on Lys-126, which acts as the N6-AMP-lysine intermediate.

It belongs to the NAD-dependent DNA ligase family. LigB subfamily.

The enzyme catalyses NAD(+) + (deoxyribonucleotide)n-3'-hydroxyl + 5'-phospho-(deoxyribonucleotide)m = (deoxyribonucleotide)n+m + AMP + beta-nicotinamide D-nucleotide.. Catalyzes the formation of phosphodiester linkages between 5'-phosphoryl and 3'-hydroxyl groups in double-stranded DNA using NAD as a coenzyme and as the energy source for the reaction. The sequence is that of DNA ligase B from Pseudomonas putida (strain W619).